A 388-amino-acid polypeptide reads, in one-letter code: Splicing factor 3B subunit 4 (388 aa).

RRM domains follow at residues 13-91 (ATIY…KASA) and 100-179 (ANIF…YAFK). The disordered stretch occupies residues 244 to 388 (QPPPLMGMAQ…GMIPPPPPPS (145 aa)). 3 stretches are compositionally biased toward pro residues: residues 261 to 325 (PPVP…PSRF), 333 to 355 (MPPPPPPGMRYPGGMPPPPPPRY), and 362 to 388 (MYPPPPPSRPPAPPSGHGMIPPPPPPS).

Belongs to the SF3B4 family.

Its subcellular location is the nucleus. Functionally, subunit of the splicing factor SF3B required for 'A' complex assembly formed by the stable binding of U2 snRNP to the branchpoint sequence (BPS) in pre-mRNA. Sequence independent binding of SF3A/SF3B complex upstream of the branch site is essential, it may anchor U2 snRNP to the pre-mRNA. May also be involved in the assembly of the 'E' complex. SF3B4 has been found in complex 'B' and 'C' as well. Belongs also to the minor U12-dependent spliceosome, which is involved in the splicing of rare class of nuclear pre-mRNA intron. In Caenorhabditis elegans, this protein is Splicing factor 3B subunit 4 (sap-49).